Here is a 137-residue protein sequence, read N- to C-terminus: Large ribosomal subunit protein uL16 (137 aa).

It belongs to the universal ribosomal protein uL16 family. In terms of assembly, part of the 50S ribosomal subunit.

In terms of biological role, binds 23S rRNA and is also seen to make contacts with the A and possibly P site tRNAs. The sequence is that of Large ribosomal subunit protein uL16 from Alkalilimnicola ehrlichii (strain ATCC BAA-1101 / DSM 17681 / MLHE-1).